A 221-amino-acid polypeptide reads, in one-letter code: Small ribosomal subunit protein uS3 (221 aa).

One can recognise a KH type-2 domain in the interval 39-107 (IRNYIKEKLY…TVILNIIEVK (69 aa)).

It belongs to the universal ribosomal protein uS3 family. In terms of assembly, part of the 30S ribosomal subunit. Forms a tight complex with proteins S10 and S14.

Its function is as follows. Binds the lower part of the 30S subunit head. Binds mRNA in the 70S ribosome, positioning it for translation. This chain is Small ribosomal subunit protein uS3, found in Caldanaerobacter subterraneus subsp. tengcongensis (strain DSM 15242 / JCM 11007 / NBRC 100824 / MB4) (Thermoanaerobacter tengcongensis).